A 261-amino-acid chain; its full sequence is Pyridoxine-5'-phosphate oxidase (261 aa).

42–45 (RGDP) contributes to the pyridoxal 5'-phosphate binding site. 95 to 98 (RMVL) is an FMN binding site. Lysine 100 lines the pyridoxal 5'-phosphate pocket. Residues 110–111 (FT), 116–117 (RK), and glutamine 139 each bind FMN. Positions 157, 161, and 165 each coordinate pyridoxal 5'-phosphate. FMN-binding positions include 174–175 (QS) and tryptophan 219. A pyridoxal 5'-phosphate-binding site is contributed by 225-227 (RLH). Arginine 229 lines the FMN pocket. Phosphothreonine is present on threonine 238. Serine 241 carries the phosphoserine modification.

This sequence belongs to the pyridoxamine 5'-phosphate oxidase family. Homodimer. The cofactor is FMN.

It catalyses the reaction pyridoxamine 5'-phosphate + O2 + H2O = pyridoxal 5'-phosphate + H2O2 + NH4(+). The enzyme catalyses pyridoxine 5'-phosphate + O2 = pyridoxal 5'-phosphate + H2O2. It functions in the pathway cofactor metabolism; pyridoxal 5'-phosphate salvage; pyridoxal 5'-phosphate from pyridoxamine 5'-phosphate: step 1/1. Its pathway is cofactor metabolism; pyridoxal 5'-phosphate salvage; pyridoxal 5'-phosphate from pyridoxine 5'-phosphate: step 1/1. Catalyzes the oxidation of either pyridoxine 5'-phosphate (PNP) or pyridoxamine 5'-phosphate (PMP) into pyridoxal 5'-phosphate (PLP). In Bos taurus (Bovine), this protein is Pyridoxine-5'-phosphate oxidase (PNPO).